We begin with the raw amino-acid sequence, 338 residues long: Queuosine 5'-phosphate N-glycosylase/hydrolase (338 aa).

Position 1 is an N-acetylmethionine (M1). Queuine is bound by residues H51, F235, D237, D311, Y312, and D316. Residue D237 is the Nucleophile or transition state stabilizer of the active site.

This sequence belongs to the QNG1 protein family. In terms of tissue distribution, highly expressed in liver.

The enzyme catalyses queuosine 5'-phosphate + H2O = queuine + D-ribose 5-phosphate. Its function is as follows. Catalyzes the hydrolysis of queuosine 5'-phosphate, releasing the nucleobase queuine (q). Is required for salvage of queuine from exogenous queuosine (Q) that is imported and then converted to queuosine 5'-phosphate intracellularly. The polypeptide is Queuosine 5'-phosphate N-glycosylase/hydrolase (Mus musculus (Mouse)).